The sequence spans 1099 residues: Adenylate-forming reductase Nps11 (1099 aa).

The segment at 29 to 360 (AEHNSNVPFF…GTECGGLNSM (332 aa)) is adenylation (A) domain. Residues histidine 244, 347 to 348 (NV), threonine 352, and 432 to 435 (LVGR) contribute to the AMP site. A Carrier domain is found at 578–664 (WSEESLVVWL…RLSQALARVV (87 aa)). The residue at position 613 (serine 613) is an O-(pantetheine 4'-phosphoryl)serine. The segment at 717 to 952 (LTGSTGGLGS…VVSWLPPHAV (236 aa)) is reductase (R) domain. NADP(+) is bound by residues 721–724 (TGGL), 809–811 (NAW), tyrosine 883, and lysine 887.

The protein belongs to the adenylate-forming reductase family.

In terms of biological role, adenylate-forming reductase, a natural product biosynthesis enzyme that resembles non-ribosomal peptide synthetases, yet serves to modify one substrate, rather than to condense two or more building blocks. The A-domain preferentially accepts benzoic acid as substrate. The natural product of the enzyme is not yet known. The sequence is that of Adenylate-forming reductase Nps11 from Serpula lacrymans var. lacrymans (strain S7.9) (Dry rot fungus).